A 304-amino-acid chain; its full sequence is Homoserine O-succinyltransferase (304 aa).

Residue Cys-142 is the Acyl-thioester intermediate of the active site. Substrate-binding residues include Lys-163 and Ser-192. His-235 functions as the Proton acceptor in the catalytic mechanism. Glu-237 is an active-site residue. Arg-249 lines the substrate pocket.

It belongs to the MetA family.

Its subcellular location is the cytoplasm. It catalyses the reaction L-homoserine + succinyl-CoA = O-succinyl-L-homoserine + CoA. It participates in amino-acid biosynthesis; L-methionine biosynthesis via de novo pathway; O-succinyl-L-homoserine from L-homoserine: step 1/1. Its function is as follows. Transfers a succinyl group from succinyl-CoA to L-homoserine, forming succinyl-L-homoserine. The sequence is that of Homoserine O-succinyltransferase from Blochmanniella pennsylvanica (strain BPEN).